The following is a 219-amino-acid chain: Large ribosomal subunit protein uL3 (219 aa).

The segment at 133 to 153 (GRASHGNSRSHNVPGSIGMAQ) is disordered. An N5-methylglutamine modification is found at Q153.

It belongs to the universal ribosomal protein uL3 family. As to quaternary structure, part of the 50S ribosomal subunit. Forms a cluster with proteins L14 and L19. Post-translationally, methylated by PrmB.

In terms of biological role, one of the primary rRNA binding proteins, it binds directly near the 3'-end of the 23S rRNA, where it nucleates assembly of the 50S subunit. This chain is Large ribosomal subunit protein uL3, found in Burkholderia thailandensis (strain ATCC 700388 / DSM 13276 / CCUG 48851 / CIP 106301 / E264).